A 564-amino-acid chain; its full sequence is Probable beta-glucosidase btgE (564 aa).

The signal sequence occupies residues M1 to A18. The segment at A285–A304 is disordered. N404 carries N-linked (GlcNAc...) asparagine glycosylation. E405 (proton donor) is an active-site residue. Catalysis depends on E501, which acts as the Nucleophile.

This sequence belongs to the glycosyl hydrolase 17 family.

It localises to the secreted. It is found in the cell wall. The enzyme catalyses Hydrolysis of terminal, non-reducing beta-D-glucosyl residues with release of beta-D-glucose.. It functions in the pathway glycan metabolism; cellulose degradation. Beta-glucosidases are one of a number of cellulolytic enzymes involved in the degradation of cellulosic biomass. Catalyzes the last step releasing glucose from the inhibitory cellobiose. The polypeptide is Probable beta-glucosidase btgE (btgE) (Aspergillus clavatus (strain ATCC 1007 / CBS 513.65 / DSM 816 / NCTC 3887 / NRRL 1 / QM 1276 / 107)).